The primary structure comprises 156 residues: Small ribosomal subunit protein uS7 (156 aa).

Belongs to the universal ribosomal protein uS7 family. As to quaternary structure, part of the 30S ribosomal subunit. Contacts proteins S9 and S11.

Functionally, one of the primary rRNA binding proteins, it binds directly to 16S rRNA where it nucleates assembly of the head domain of the 30S subunit. Is located at the subunit interface close to the decoding center, probably blocks exit of the E-site tRNA. The polypeptide is Small ribosomal subunit protein uS7 (Vibrio atlanticus (strain LGP32) (Vibrio splendidus (strain Mel32))).